Reading from the N-terminus, the 605-residue chain is Isocitrate dehydrogenase kinase/phosphatase (605 aa).

Residues 327–333 (APGIKGL) and Lys-348 each bind ATP. Asp-383 is a catalytic residue.

This sequence belongs to the AceK family.

Its subcellular location is the cytoplasm. It carries out the reaction L-seryl-[isocitrate dehydrogenase] + ATP = O-phospho-L-seryl-[isocitrate dehydrogenase] + ADP + H(+). Its function is as follows. Bifunctional enzyme which can phosphorylate or dephosphorylate isocitrate dehydrogenase (IDH) on a specific serine residue. This is a regulatory mechanism which enables bacteria to bypass the Krebs cycle via the glyoxylate shunt in response to the source of carbon. When bacteria are grown on glucose, IDH is fully active and unphosphorylated, but when grown on acetate or ethanol, the activity of IDH declines drastically concomitant with its phosphorylation. This chain is Isocitrate dehydrogenase kinase/phosphatase, found in Burkholderia lata (strain ATCC 17760 / DSM 23089 / LMG 22485 / NCIMB 9086 / R18194 / 383).